Here is a 214-residue protein sequence, read N- to C-terminus: Glutathione S-transferase F12 (214 aa).

The GST N-terminal domain occupies V2–G82. Residues A11–A12, Q40–K41, Q53–V54, and E66–S67 each bind glutathione. The region spanning S89 to H214 is the GST C-terminal domain.

It belongs to the GST superfamily. Phi family.

Its subcellular location is the cytoplasm. It is found in the cytosol. The catalysed reaction is RX + glutathione = an S-substituted glutathione + a halide anion + H(+). In terms of biological role, involved in the transport and/or accumulation of both anthocyanins and proanthocyanidins (PA)s in the vacuole. Functions in the cytosol to maintain the regular accumulation in the vacuole of PA precursors, such as epicatechin and glycosylated epicatechin. The sequence is that of Glutathione S-transferase F12 from Arabidopsis thaliana (Mouse-ear cress).